The sequence spans 286 residues: ATP synthase gamma chain (286 aa).

This sequence belongs to the ATPase gamma chain family. As to quaternary structure, F-type ATPases have 2 components, CF(1) - the catalytic core - and CF(0) - the membrane proton channel. CF(1) has five subunits: alpha(3), beta(3), gamma(1), delta(1), epsilon(1). CF(0) has three main subunits: a, b and c.

The protein localises to the cell inner membrane. Produces ATP from ADP in the presence of a proton gradient across the membrane. The gamma chain is believed to be important in regulating ATPase activity and the flow of protons through the CF(0) complex. The polypeptide is ATP synthase gamma chain (Pseudomonas fluorescens (strain SBW25)).